The primary structure comprises 126 residues: SH2 domain-containing protein 1A (126 aa).

Residues 6 to 102 form the SH2 domain; that stretch reads VYHGKISREM…GIVTPLQYPV (97 aa). Residues 67–92 form an interaction with FYN SH3 domain region; that stretch reads ETAPGVHKRFFRKVKNLISAFQKPDQ. K89 carries the post-translational modification N6-acetyllysine. Positions 100 to 126 are disordered; sequence YPVEKSSARSPQAPTGRRDSDICLKAP. Basic and acidic residues predominate over residues 115 to 126; sequence GRRDSDICLKAP. S119 carries the post-translational modification Phosphoserine.

In terms of assembly, interacts with CD84, CD244, LY9, SLAMF1 and FYN. Interacts with NTRK1, NTRK2 and NTRK3.

It is found in the cytoplasm. Cytoplasmic adapter regulating receptors of the signaling lymphocytic activation molecule (SLAM) family such as SLAMF1, CD244, LY9, CD84, SLAMF6 and SLAMF7. In SLAM signaling seems to cooperate with SH2D1B/EAT-2. Initially it has been proposed that association with SLAMF1 prevents SLAMF1 binding to inhibitory effectors including INPP5D/SHIP1 and PTPN11/SHP-2. However, by simultaneous interactions, recruits FYN which subsequently phosphorylates and activates SLAMF1. Positively regulates CD244/2B4- and CD84-mediated natural killer (NK) cell functions. Can also promote CD48-, SLAMF6 -, LY9-, and SLAMF7-mediated NK cell activation. In the context of NK cell-mediated cytotoxicity enhances conjugate formation with target cells. May also regulate the activity of the neurotrophin receptors NTRK1, NTRK2 and NTRK3. The sequence is that of SH2 domain-containing protein 1A (Sh2d1a) from Rattus norvegicus (Rat).